The chain runs to 833 residues: Probable serine/threonine-protein kinase DDB_G0277165 (833 aa).

The region spanning F9–F262 is the Protein kinase domain. Residues L15–V23 and K38 each bind ATP. The active-site Proton acceptor is D133. The UBA domain occupies Q288–E329. Basic and acidic residues predominate over residues N338–S351. 3 disordered regions span residues N338–S472, Q528–I626, and F764–N799. Composition is skewed to low complexity over residues N365–N432 and S441–S459. A compositionally biased stretch (polar residues) spans N460–S472. Low complexity predominate over residues Q528 to S589. Residues G600–E625 show a composition bias toward polar residues.

It belongs to the protein kinase superfamily. CAMK Ser/Thr protein kinase family.

The enzyme catalyses L-seryl-[protein] + ATP = O-phospho-L-seryl-[protein] + ADP + H(+). It carries out the reaction L-threonyl-[protein] + ATP = O-phospho-L-threonyl-[protein] + ADP + H(+). In Dictyostelium discoideum (Social amoeba), this protein is Probable serine/threonine-protein kinase DDB_G0277165.